The following is a 289-amino-acid chain: Rhomboid-type serine protease 2 (289 aa).

6 helical membrane passes run 26–46 (VVII…VDIQ), 67–87 (FPFI…LTPL), 100–120 (CLAL…IGLE), 122–142 (FVFG…LLLG), 157–179 (IGTY…AVLV), and 184–203 (FWGH…SSTL). Catalysis depends on S134, which acts as the Nucleophile. H187 is a catalytic residue.

Belongs to the peptidase S54 family.

Its subcellular location is the golgi apparatus membrane. The protein resides in the golgi apparatus. The protein localises to the cis-Golgi network membrane. The catalysed reaction is Cleaves type-1 transmembrane domains using a catalytic dyad composed of serine and histidine that are contributed by different transmembrane domains.. Probable rhomboid-type serine protease that catalyzes intramembrane proteolysis. The chain is Rhomboid-type serine protease 2 (RBD2) from Podospora anserina (Pleurage anserina).